The following is a 287-amino-acid chain: Thioredoxin-related transmembrane protein 2 (287 aa).

The first 13 residues, 1 to 13 (MAVLAPLLAVLYA), serve as a signal peptide directing secretion. The Extracellular segment spans residues 14-112 (APGLLRWVSQ…ILFFRLDLRM (99 aa)). Residues 113 to 133 (GLLYITLCIVFLMTCKPPLYL) traverse the membrane as a helical segment. Residues 134–287 (GPEHIKYFSD…NEWNDGKKDQ (154 aa)) are Cytoplasmic-facing. A Thioredoxin domain is found at 137–209 (HIKYFSDKTL…PEVSCRYSIS (73 aa)). A Di-lysine motif motif is present at residues 284–287 (KKDQ).

As to quaternary structure, monomer. Homodimer; disulfide-linked. Occurs in both reduced and oxidized monomeric form. Oxidative conditions increase homodimerization.

Its subcellular location is the endoplasmic reticulum membrane. The protein resides in the mitochondrion membrane. Its function is as follows. Endoplasmic reticulum and mitochondria-associated protein that probably functions as a regulator of cellular redox state and thereby regulates protein post-translational modification, protein folding and mitochondrial activity. The polypeptide is Thioredoxin-related transmembrane protein 2 (tmx2) (Xenopus laevis (African clawed frog)).